Reading from the N-terminus, the 357-residue chain is uncharacterized protein (357 aa).

Phosphoserine is present on serine 72. Disordered regions lie at residues 79–98 (GVNEDHYTGGGSSNNNRPSR), 264–290 (QKQLQGNSKPVKNLPNSNAKQRAGASV), and 323–357 (ISDEDEEDEEEDSFQQRSANNRILPAEILSNEPLK). Residues 324-335 (SDEDEEDEEEDS) are compositionally biased toward acidic residues.

This is an uncharacterized protein from Saccharomyces cerevisiae (strain ATCC 204508 / S288c) (Baker's yeast).